The sequence spans 252 residues: Diphthine synthase (252 aa).

Residues Leu-9, Asp-85, Val-88, 113–114 (SI), Leu-165, Ala-204, and His-229 contribute to the S-adenosyl-L-methionine site.

Belongs to the diphthine synthase family. In terms of assembly, homodimer.

The catalysed reaction is 2-[(3S)-amino-3-carboxypropyl]-L-histidyl-[translation elongation factor 2] + 3 S-adenosyl-L-methionine = diphthine-[translation elongation factor 2] + 3 S-adenosyl-L-homocysteine + 3 H(+). Its pathway is protein modification; peptidyl-diphthamide biosynthesis. In terms of biological role, S-adenosyl-L-methionine-dependent methyltransferase that catalyzes the trimethylation of the amino group of the modified target histidine residue in translation elongation factor 2 (EF-2), to form an intermediate called diphthine. The three successive methylation reactions represent the second step of diphthamide biosynthesis. In Methanocorpusculum labreanum (strain ATCC 43576 / DSM 4855 / Z), this protein is Diphthine synthase.